A 93-amino-acid polypeptide reads, in one-letter code: Large ribosomal subunit protein eL42 (93 aa).

Zn(2+) is bound by residues Cys-11, Cys-14, Cys-71, and Cys-74. The C4-type zinc-finger motif lies at 11–74 (CRYCGKHTLH…VNIRFRCTEC (64 aa)).

Belongs to the eukaryotic ribosomal protein eL42 family. Part of the 50S ribosomal subunit. Zn(2+) is required as a cofactor.

Binds to the 23S rRNA. This chain is Large ribosomal subunit protein eL42, found in Archaeoglobus fulgidus (strain ATCC 49558 / DSM 4304 / JCM 9628 / NBRC 100126 / VC-16).